Here is a 428-residue protein sequence, read N- to C-terminus: Somatostatin receptor type 3 (428 aa).

The span at 1–12 (MATVTYPSSEPT) shows a compositional bias: polar residues. The segment at 1–20 (MATVTYPSSEPTTLDPGNAS) is disordered. Residues 1-45 (MATVTYPSSEPTTLDPGNASSTWPLDTTLGNTSAGASLTGLAVSG) are Extracellular-facing. N-linked (GlcNAc...) asparagine glycans are attached at residues Asn18 and Asn31. Residues 46-71 (ILISLVYLVVCVVGLLGNSLVIYVVL) form a helical membrane-spanning segment. The Cytoplasmic portion of the chain corresponds to 72 to 81 (RHTSSPSVTS). Residues 82–103 (VYILNLALADELFMLGLPFLAA) form a helical membrane-spanning segment. Residues 104-118 (QNALSYWPFGSLMCR) lie on the Extracellular side of the membrane. An intrachain disulfide couples Cys117 to Cys192. The helical transmembrane segment at 119–140 (LVMAVDGINQFTSIFCLTVMSV) threads the bilayer. At 141 to 162 (DRYLAVVHPTRSARWRTAPVAR) the chain is on the cytoplasmic side. A helical transmembrane segment spans residues 163–182 (TVSAAVWVASAVVVLPVVVF). The Extracellular segment spans residues 183 to 206 (SGVPRGMSTCHMQWPEPAAAWRTA). Residues 207-232 (FIIYTAALGFFGPLLVICLCYLLIVV) form a helical membrane-spanning segment. The Cytoplasmic segment spans residues 233 to 266 (KVRSTTRRVRAPSCQWVQAPACQRRRRSERRVTR). Residues 267–288 (MVVAVVALFVLCWMPFYLLNIV) form a helical membrane-spanning segment. Residues 289–302 (NVVCPLPEEPAFFG) lie on the Extracellular side of the membrane. Residues 303–325 (LYFLVVALPYANSCANPILYGFL) traverse the membrane as a helical segment. The Cytoplasmic segment spans residues 326–428 (SYRFKQGFRR…GDKASTLSHL (103 aa)). Residues Ser341, Ser346, and Ser351 each carry the phosphoserine modification. The interval 344–428 (IRSQEPGSGP…GDKASTLSHL (85 aa)) is disordered. Thr357 is subject to Phosphothreonine. Acidic residues predominate over residues 357–370 (TEEEEDEEEEERRE). The span at 385-412 (RLSQIAQAGTSGQQPRPCTGTAKEQQLL) shows a compositional bias: polar residues.

The protein belongs to the G-protein coupled receptor 1 family. In terms of assembly, homodimer and heterodimer with SSTR2. Heterodimerization with SSTR2 inactivates SSTR3 receptor function. Post-translationally, phosphorylated. Phosphorylation increases upon somatostatin binding. In terms of tissue distribution, in the brain, primarily observed in the forebrain. Moderate levels found throughout laminae 2-6 of the neocortex and allocortex, and high levels in lamina 2 of the piriform and entorhinal cortices. High levels also present in the cornu ammonis fields of the hippocampus. In the amygdala, highly expressed in the nucleus of the lateral olfactory tract with expression also detected in the rostral portions of the basal magnocellular and lateral nuclei. In the diencephalon, moderate levels observed in the ventromedial and arcuate nuclei of the hypothalamus. In the midbrain, moderate levels found in the lateral portion of the substantia nigra pars reticulata.

It is found in the cell membrane. Functionally, receptor for somatostatin-14 and -28. This receptor is coupled via pertussis toxin sensitive G proteins to inhibition of adenylyl cyclase. The polypeptide is Somatostatin receptor type 3 (Sstr3) (Mus musculus (Mouse)).